A 396-amino-acid polypeptide reads, in one-letter code: Putative cytochrome P450 YjiB (396 aa).

Residue Cys349 coordinates heme.

The protein belongs to the cytochrome P450 family. Requires heme as cofactor.

The polypeptide is Putative cytochrome P450 YjiB (yjiB) (Bacillus subtilis (strain 168)).